The primary structure comprises 800 residues: DNA topoisomerase 4 subunit A (800 aa).

The Topo IIA-type catalytic domain occupies 31–495 (LPDVRDGLKP…EIEEIKIDKE (465 aa)). Y119 (O-(5'-phospho-DNA)-tyrosine intermediate) is an active-site residue.

It belongs to the type II topoisomerase GyrA/ParC subunit family. ParC type 2 subfamily. Heterotetramer composed of ParC and ParE.

The protein resides in the cell membrane. The enzyme catalyses ATP-dependent breakage, passage and rejoining of double-stranded DNA.. In terms of biological role, topoisomerase IV is essential for chromosome segregation. It relaxes supercoiled DNA. Performs the decatenation events required during the replication of a circular DNA molecule. The protein is DNA topoisomerase 4 subunit A of Staphylococcus aureus.